The sequence spans 964 residues: Protein translocase subunit SecA (964 aa).

ATP contacts are provided by residues Gln86, 104–108 (GEGKT), and Asp494. Residues 846 to 964 (ETAESADTIA…YKMCHGQNEA (119 aa)) form a disordered region. Acidic residues predominate over residues 871–882 (AEGEVEEEDEDT). The span at 887-900 (AIAESAAASEAGES) shows a compositional bias: low complexity. The Zn(2+) site is built by Cys947, Cys949, Cys958, and His959.

It belongs to the SecA family. As to quaternary structure, monomer and homodimer. Part of the essential Sec protein translocation apparatus which comprises SecA, SecYEG and auxiliary proteins SecDF. Other proteins may also be involved. Zn(2+) is required as a cofactor.

The protein localises to the cell membrane. The protein resides in the cytoplasm. It catalyses the reaction ATP + H2O + cellular proteinSide 1 = ADP + phosphate + cellular proteinSide 2.. Functionally, part of the Sec protein translocase complex. Interacts with the SecYEG preprotein conducting channel. Has a central role in coupling the hydrolysis of ATP to the transfer of proteins into and across the cell membrane, serving as an ATP-driven molecular motor driving the stepwise translocation of polypeptide chains across the membrane. This is Protein translocase subunit SecA from Bifidobacterium longum subsp. infantis (strain ATCC 15697 / DSM 20088 / JCM 1222 / NCTC 11817 / S12).